A 147-amino-acid chain; its full sequence is Epididymal secretory protein E3-alpha (147 aa).

The signal sequence occupies residues 1-25 (MTSSLKIWGILLALLCILCRLCVYS).

As to expression, epididymis, with predominant expression in the corpus region. Moderately expressed in the vas deferens; only low levels are detectable in the caput and cauda regions.

The protein resides in the secreted. Possible function in sperm maturation. The polypeptide is Epididymal secretory protein E3-alpha (EDDM3A) (Homo sapiens (Human)).